Reading from the N-terminus, the 181-residue chain is Putative manganese efflux pump MntP (181 aa).

The next 6 membrane-spanning stretches (helical) occupy residues 3 to 23 (LIFL…ANGA), 42 to 62 (IFQA…VGFI), 63 to 83 (SYID…KMIK), 101 to 121 (LMLG…TFSF), 124 to 144 (INIA…CVIA), and 160 to 180 (LVLG…THLI).

Belongs to the MntP (TC 9.B.29) family.

It is found in the cell inner membrane. Functionally, probably functions as a manganese efflux pump. The protein is Putative manganese efflux pump MntP of Campylobacter fetus subsp. fetus (strain 82-40).